A 66-amino-acid chain; its full sequence is Large ribosomal subunit protein bL35 (66 aa).

This sequence belongs to the bacterial ribosomal protein bL35 family.

The sequence is that of Large ribosomal subunit protein bL35 from Lysinibacillus sphaericus (strain C3-41).